Consider the following 162-residue polypeptide: NADH-quinone oxidoreductase subunit I (162 aa).

4Fe-4S ferredoxin-type domains follow at residues 53–83 and 93–122; these read LRRY…IEAE and TRYD…EGPN. [4Fe-4S] cluster contacts are provided by Cys-63, Cys-66, Cys-69, Cys-73, Cys-102, Cys-105, Cys-108, and Cys-112.

This sequence belongs to the complex I 23 kDa subunit family. NDH-1 is composed of 14 different subunits. Subunits NuoA, H, J, K, L, M, N constitute the membrane sector of the complex. The cofactor is [4Fe-4S] cluster.

It is found in the cell inner membrane. The enzyme catalyses a quinone + NADH + 5 H(+)(in) = a quinol + NAD(+) + 4 H(+)(out). NDH-1 shuttles electrons from NADH, via FMN and iron-sulfur (Fe-S) centers, to quinones in the respiratory chain. The immediate electron acceptor for the enzyme in this species is believed to be ubiquinone. Couples the redox reaction to proton translocation (for every two electrons transferred, four hydrogen ions are translocated across the cytoplasmic membrane), and thus conserves the redox energy in a proton gradient. The sequence is that of NADH-quinone oxidoreductase subunit I from Sphingopyxis alaskensis (strain DSM 13593 / LMG 18877 / RB2256) (Sphingomonas alaskensis).